The following is a 69-amino-acid chain: Large ribosomal subunit protein bL28 (69 aa).

The disordered stretch occupies residues Met-1–Arg-27.

This sequence belongs to the bacterial ribosomal protein bL28 family.

The polypeptide is Large ribosomal subunit protein bL28 (Sulfurovum sp. (strain NBC37-1)).